Reading from the N-terminus, the 343-residue chain is Small ribosomal subunit biogenesis GTPase RsgA (343 aa).

The segment at 1 to 32 (MAKRRLSKRQVDRIRERQSQRLDTSVAAPDGK) is disordered. Residues 9–20 (RQVDRIRERQSQ) show a composition bias toward basic and acidic residues. A CP-type G domain is found at 109–273 (YGKLKPVAAN…CIDSPGIREF (165 aa)). GTP contacts are provided by residues 156–159 (NKLD) and 215–223 (GQSGVGKSS). Residues Cys-297, Cys-302, His-304, and Cys-310 each contribute to the Zn(2+) site.

This sequence belongs to the TRAFAC class YlqF/YawG GTPase family. RsgA subfamily. In terms of assembly, monomer. Associates with 30S ribosomal subunit, binds 16S rRNA. Zn(2+) serves as cofactor.

It localises to the cytoplasm. Functionally, one of several proteins that assist in the late maturation steps of the functional core of the 30S ribosomal subunit. Helps release RbfA from mature subunits. May play a role in the assembly of ribosomal proteins into the subunit. Circularly permuted GTPase that catalyzes slow GTP hydrolysis, GTPase activity is stimulated by the 30S ribosomal subunit. The polypeptide is Small ribosomal subunit biogenesis GTPase RsgA (Saccharophagus degradans (strain 2-40 / ATCC 43961 / DSM 17024)).